Consider the following 582-residue polypeptide: Calcium-dependent protein kinase 24 (582 aa).

The segment at 1-36 (MGSCVSSPLKGSPFGKRPVRRRHSSNSRTSSVPRFD) is disordered. A lipid anchor (N-myristoyl glycine) is attached at glycine 2. Positions 66-324 (YDLGKELGRG…VQEVLEHPWI (259 aa)) constitute a Protein kinase domain. Residues 72 to 80 (LGRGEFGVT) and lysine 95 each bind ATP. Aspartate 190 functions as the Proton acceptor in the catalytic mechanism. Serine 230 carries the phosphoserine modification. Positions 330–360 (APNVNLGDNVRTKIQQFLLMNRFKKKVLRIV) are autoinhibitory domain. 4 EF-hand domains span residues 367-402 (EEIA…IGQV), 403-438 (VPDG…LKRM), 439-474 (GCDE…DKLG), and 478-513 (GNDQ…GTDW). Ca(2+) is bound by residues aspartate 380, aspartate 382, asparagine 384, histidine 386, glutamate 391, aspartate 416, aspartate 418, asparagine 420, methionine 422, glutamate 427, aspartate 452, asparagine 454, asparagine 456, glutamate 463, aspartate 491, asparagine 493, aspartate 495, and arginine 497. Serine 499 is subject to Phosphoserine. Glutamate 502 is a binding site for Ca(2+).

This sequence belongs to the protein kinase superfamily. Ser/Thr protein kinase family. CDPK subfamily.

It is found in the membrane. It carries out the reaction L-seryl-[protein] + ATP = O-phospho-L-seryl-[protein] + ADP + H(+). The enzyme catalyses L-threonyl-[protein] + ATP = O-phospho-L-threonyl-[protein] + ADP + H(+). Activated by calcium. Autophosphorylation may play an important role in the regulation of the kinase activity. Its function is as follows. May play a role in signal transduction pathways that involve calcium as a second messenger. The protein is Calcium-dependent protein kinase 24 (CPK24) of Arabidopsis thaliana (Mouse-ear cress).